An 847-amino-acid polypeptide reads, in one-letter code: Glucans biosynthesis glucosyltransferase H (847 aa).

Residues 1-138 are Cytoplasmic-facing; the sequence is MNKTTEYIDA…KWRTVGTIRR (138 aa). The helical transmembrane segment at 139–156 threads the bilayer; that stretch reads YILLILTLAQTVVATWYM. The Periplasmic segment spans residues 157 to 193; that stretch reads KTILPYQGWALINPMDMVGQDIWVSFMQLLPYMLQTG. The chain crosses the membrane as a helical span at residues 194-216; the sequence is ILILFAVLFCWVSAGFWTALMGF. At 217 to 511 the chain is on the cytoplasmic side; the sequence is LQLLIGRDKY…LVKGMHPVHR (295 aa). Residues 512–534 form a helical membrane-spanning segment; that stretch reads AVFLTGVMSYLSAPLWFMFLALS. Residues 535–567 lie on the Periplasmic side of the membrane; that stretch reads TALQVVHALTEPQYFLQPRQLFPVWPQWRPELA. Residues 568 to 590 form a helical membrane-spanning segment; the sequence is IALFASTMVLLFLPKLLSIMLIW. Topologically, residues 591–602 are cytoplasmic; that stretch reads CKGTKEYGGFWR. A helical membrane pass occupies residues 603–625; sequence VTLSLLLEVLFSVLLAPVRMLFH. Topologically, residues 626–679 are periplasmic; that stretch reads TVFVVSAFLGWEVVWNSPQRDDDSTPWGEAFMRHGSQLLLGLVWAVGMAWLDLR. The chain crosses the membrane as a helical span at residues 680–702; it reads FLFWLAPIVFSLILSPFVSVISS. Over 703 to 847 the chain is Cytoplasmic; the sequence is RSTVGLRTKR…ALQGRTSSAG (145 aa).

Belongs to the glycosyltransferase 2 family. OpgH subfamily.

The protein resides in the cell inner membrane. The protein operates within glycan metabolism; osmoregulated periplasmic glucan (OPG) biosynthesis. In terms of biological role, involved in the biosynthesis of osmoregulated periplasmic glucans (OPGs). The chain is Glucans biosynthesis glucosyltransferase H from Salmonella typhi.